The chain runs to 437 residues: Doublesex- and mab-3-related transcription factor A2 (437 aa).

A DNA-binding region (DM) is located at residues 49-96 (CARCRNHGVVSALKGHKRYCRWKDCMCAKCTLIAERQRVMAAQVALRR). Disordered stretches follow at residues 163–254 (SVTP…ARQR) and 297–317 (DKSE…PSVS). Composition is skewed to low complexity over residues 179 to 201 (SESV…SGSE) and 223 to 235 (SPSS…SESG). Residues 254-289 (RTPIDILTRVFPAQKRSVLELVLQGCGGDVVQAIEQ) enclose the DMA domain.

This sequence belongs to the DMRT family.

It is found in the nucleus. May be involved in sexual development. The polypeptide is Doublesex- and mab-3-related transcription factor A2 (dmrta2) (Xenopus tropicalis (Western clawed frog)).